We begin with the raw amino-acid sequence, 359 residues long: Mitochondrial glutathione transporter SLC25A39 (359 aa).

The Mitochondrial intermembrane portion of the chain corresponds to 1-14 (MADQDPAGISPLQQ). Solcar repeat units follow at residues 9–151 (ISPL…LKAF), 159–243 (SDLY…VKSW), and 253–347 (TSVG…GKSF). Residues 15 to 35 (MVASGTGAVVTSLFMTPLDVV) form a helical membrane-spanning segment. At 36–121 (KVRLQSQRPS…VKIVRHEGTR (86 aa)) the chain is on the mitochondrial matrix side. [2Fe-2S] cluster contacts are provided by Cys-74, Cys-78, Cys-88, and Cys-94. The helical transmembrane segment at 122-142 (TLWSGLPATLVMTVPATAIYF) threads the bilayer. The Mitochondrial intermembrane segment spans residues 143-160 (TAYDQLKAFLCGRALTSD). Residues 161–181 (LYAPMVAGALARLGTVTVISP) form a helical membrane-spanning segment. Residues 182 to 214 (LELMRTKLQAQHVSYRELGACVRTAVAQGGWRS) are Mitochondrial matrix-facing. A helical transmembrane segment spans residues 215–235 (LWLGWGPTALRDVPFSALYWF). Topologically, residues 236 to 258 (NYELVKSWLNGFRPKDQTSVGMS) are mitochondrial intermembrane. Residues 259-279 (FVAGGISGTVAAVLTLPFDVV) form a helical membrane-spanning segment. Over 280-317 (KTQRQVALGAMEAVRVNPLHVDSTWLLLRRIRAESGTK) the chain is Mitochondrial matrix. The helical transmembrane segment at 318 to 338 (GLFAGFLPRIIKAAPSCAIMI) threads the bilayer. The Mitochondrial intermembrane segment spans residues 339–359 (STYEFGKSFFQRLNQDRLLGG).

Belongs to the mitochondrial carrier (TC 2.A.29) family. Post-translationally, cleaved and degraded by AFG3L2; degradation by AFG3L2 is regulated by the ability of SLC25A39 to bind iron-sulfur. In absence of mitochondrial glutathione, SLC25A39 binds iron-sulfur, preventing cleavage and degradation by AFG3L2. The presence of mitochondrial glutathione prevents iron-sulfur-binding to SLC25A39, promoting cleavage and degradation by AFG3L2. Expressed in many tissues. Abundant in testis and kidney.

The protein localises to the mitochondrion inner membrane. It carries out the reaction glutathione(in) = glutathione(out). The activity of SLC25A39 is regulated by levels of mitochondrial glutathione via its ability to bind [2Fe-2S] iron-sulfur cluster. Upon physiological levels of mitochondrial glutathione, glutathione prevents iron-sulfur-binding to SLC25A39 promoting cleavage and degradation by AFG3L2. Upon depletion of mitochondrial glutathione, SLC25A39 binds iron-sulfur, preventing cleavage and degradation by AFG3L2. In terms of biological role, mitochondrial transporter required for glutathione import into mitochondria. Glutathione, which plays key roles in oxidative metabolism, is produced exclusively in the cytosol and is imported in many organelles. Mitochondrial glutathione is required for the activity and stability of proteins containing iron-sulfur clusters, as well as erythropoiesis. The sequence is that of Mitochondrial glutathione transporter SLC25A39 from Homo sapiens (Human).